The chain runs to 453 residues: Cysteine--tRNA ligase (453 aa).

Cys-30 is a binding site for Zn(2+). The short motif at 32-42 (PTVYDRAHLGN) is the 'HIGH' region element. Residues Cys-212, His-237, and Glu-241 each contribute to the Zn(2+) site. The 'KMSKS' region motif lies at 268–272 (KMSKS). Residue Lys-271 coordinates ATP.

The protein belongs to the class-I aminoacyl-tRNA synthetase family. Monomer. Zn(2+) is required as a cofactor.

Its subcellular location is the cytoplasm. It catalyses the reaction tRNA(Cys) + L-cysteine + ATP = L-cysteinyl-tRNA(Cys) + AMP + diphosphate. This chain is Cysteine--tRNA ligase, found in Jannaschia sp. (strain CCS1).